We begin with the raw amino-acid sequence, 245 residues long: 1-acyl-sn-glycerol-3-phosphate acyltransferase (245 aa).

The residue at position 1 (methionine 1) is an N-formylmethionine. Positions 73-78 (HQNNYD) match the HXXXXD motif motif.

This sequence belongs to the 1-acyl-sn-glycerol-3-phosphate acyltransferase family.

The protein resides in the cell inner membrane. The enzyme catalyses a 1-acyl-sn-glycero-3-phosphate + an acyl-CoA = a 1,2-diacyl-sn-glycero-3-phosphate + CoA. It catalyses the reaction a fatty acyl-[ACP] + a 1-acyl-sn-glycero-3-phosphate = a 1,2-diacyl-sn-glycero-3-phosphate + holo-[ACP]. Its pathway is phospholipid metabolism; CDP-diacylglycerol biosynthesis; CDP-diacylglycerol from sn-glycerol 3-phosphate: step 2/3. Functionally, converts lysophosphatidic acid (LPA) into phosphatidic acid by incorporating an acyl moiety at the 2 position. This enzyme can utilize either acyl-CoA or acyl-ACP as the fatty acyl donor. This Escherichia coli (strain K12) protein is 1-acyl-sn-glycerol-3-phosphate acyltransferase (plsC).